The primary structure comprises 324 residues: Olfactory receptor 4K15 (324 aa).

The Extracellular segment spans residues 1 to 25 (MNETNHSRVTEFVLLGLSSSRELQP). Residues Asn-2 and Asn-5 are each glycosylated (N-linked (GlcNAc...) asparagine). A helical membrane pass occupies residues 26–49 (FLFLTFSLLYLAILLGNFLIILTV). Residues 50 to 57 (TSDSRLHT) lie on the Cytoplasmic side of the membrane. The chain crosses the membrane as a helical span at residues 58–79 (PMYFLLANLSFIDVCVASFATP). Residues 80–100 (KMIADFLVERKTISFDACLAQ) lie on the Extracellular side of the membrane. Cys-97 and Cys-189 are disulfide-bonded. The chain crosses the membrane as a helical span at residues 101–120 (IFFVHLFTGSEMVLLVSMAY). At 121-139 (DRYVAICKPLHYMTVMSRR) the chain is on the cytoplasmic side. A helical transmembrane segment spans residues 140 to 158 (VCVVLVLISWFVGFIHTTS). Topologically, residues 159 to 195 (QLAFTVNLPFCGPNKVDSFFCDLPLVTKLACIDTYVV) are extracellular. Residues 196–219 (SLLIVADSGFLSLSSFLLLVVSYT) traverse the membrane as a helical segment. The Cytoplasmic segment spans residues 220-235 (VILVTVRNRSSASMAK). Residues 236 to 258 (ARSTLTAHITVVTLFFGPCIFIY) traverse the membrane as a helical segment. Topologically, residues 259–269 (VWPFSSYSVDK) are extracellular. The helical transmembrane segment at 270-289 (VLAVFYTIFTLILNPVIYTL) threads the bilayer. Over 290 to 324 (RNKEVKAAMSKLKSRYLKPSQVSVVIRNVLFLETK) the chain is Cytoplasmic.

This sequence belongs to the G-protein coupled receptor 1 family.

It localises to the cell membrane. Its function is as follows. Odorant receptor. The sequence is that of Olfactory receptor 4K15 (OR4K15) from Homo sapiens (Human).